The chain runs to 377 residues: Erythronate-4-phosphate dehydrogenase (377 aa).

Substrate contacts are provided by S45 and T67. Residues 127-128 (QV), D147, and T176 contribute to the NAD(+) site. The active site involves R209. Residue D233 participates in NAD(+) binding. Residue E238 is part of the active site. The active-site Proton donor is H255. G258 is a binding site for NAD(+). Y259 provides a ligand contact to substrate.

It belongs to the D-isomer specific 2-hydroxyacid dehydrogenase family. PdxB subfamily. As to quaternary structure, homodimer.

The protein localises to the cytoplasm. It catalyses the reaction 4-phospho-D-erythronate + NAD(+) = (R)-3-hydroxy-2-oxo-4-phosphooxybutanoate + NADH + H(+). It participates in cofactor biosynthesis; pyridoxine 5'-phosphate biosynthesis; pyridoxine 5'-phosphate from D-erythrose 4-phosphate: step 2/5. Its function is as follows. Catalyzes the oxidation of erythronate-4-phosphate to 3-hydroxy-2-oxo-4-phosphonooxybutanoate. This Vibrio atlanticus (strain LGP32) (Vibrio splendidus (strain Mel32)) protein is Erythronate-4-phosphate dehydrogenase.